The sequence spans 1226 residues: MGHLPRGTLGGRRLLPLLGLFVLLKIVTTFHVAVQDDNNIVVSLEASDIVSPASVYVVRVAGESKNYFFEFEEFNSTLPPPVVFKATYHGLYYIITLVVVNGNVVTKPSRSITVLTKPLPVTSVSIYDYKPSPETGVLFEIHYPEKYNVFSRVNISYWEGRDFRTMLYKDFFKGKTVFNHWLPGLCYSNITFQLVSEATFNKSTLVEYSGVSHEPKQHRTAPYPPRNISVRFVNLNKNNWEEPSGSFPEDSFIKPPQDSIGRDRRFHFPEETPETPPSNVSSGSPPSNVSSAWPDPNSTDYESTSQPFWWDSASAAPENEEDFVSALPADYDTETTLDRTEKPTADPFSAFPVQMTLSWLPPKPPTAFDGFNILIEREENFTDYLTVDEEAHEFVAELKEPGKYKLSVTTFSSSGACETRKSQSAKSLSFYISPTGEWIEELTEKPQHVSVHVLSSTTALMSWTSSQENYNSTIVSVVSLTCQKQKESQRLEKQYCTQVNSSKPVIENLVPGAQYQVVMYLRKGPLIGPPSDPVTFAIVPTGIKDLMLYPLGPTAVVLSWTRPILGVFRKYVVEMFYFNPTTMTSEWTTYYEIAATVSLTASVRIASLLPAWYYNFRVTMVTWGDPELSCCDSSTISFITAPVAPEITSVEYFNSLLYISWTYGDATTDLSHSRMLHWMVVAEGRKKIKKSVTRNVMTAILSLPPGDIYNLSVTACTERGSNTSLPRLVKLEPAPPKSLFAVNKTQTSVTLLWVEEGVADFFEVFCQQLGSGHNGKLQEPVAVSSHVVTISSLLPATAYNCSVTSFSHDTPSVPTFIAVSTMVTEVNPNVVVISVLAILSTLLIGLLLVTLVILRKKHLQMARECGAGTFVNFASLEREGKLPYSWRRSVFALLTLLPSCLWTDYLLAFYINPWSKNGLKKRKLTNPVQLDDFDSYIKDMAKDSDYKFSLQFEELKLIGLDIPHFAADLPLNRCKNRYTNILPYDFSRVRLVSMNEEEGADYINANYIPGYNSPQEYIATQGPLPETRNDFWKMVLQQKSHIIVMLTQCNEKRRVKCDHYWPFTEEPIAYGDITVEMVSEEEEEDWASRHFRINYADEAQDVMHFNYTAWPDHGVPPANAAESILQFVFTVRQQAAKSKGPMIIHCSAGVGRTGTFIALDRLLQHIRDHEFVDILGLVSEMRSYRMSMVQTEEQYIFIHQCVQLMWLRKKQQFCISDVIYENVSKS.

A signal peptide spans 1–29 (MGHLPRGTLGGRRLLPLLGLFVLLKIVTT). Residues 30 to 115 (FHVAVQDDNN…TKPSRSITVL (86 aa)) form the Fibronectin type-III 1 domain. Topologically, residues 30–832 (FHVAVQDDNN…VTEVNPNVVV (803 aa)) are extracellular. N-linked (GlcNAc...) asparagine glycans are attached at residues N75, N154, and N227. The interval 242 to 305 (EPSGSFPEDS…PNSTDYESTS (64 aa)) is disordered. Residues 260-270 (IGRDRRFHFPE) show a composition bias toward basic and acidic residues. A compositionally biased stretch (low complexity) spans 277-291 (PSNVSSGSPPSNVSS). N279 carries an N-linked (GlcNAc...) asparagine glycan. Residues 296–305 (PNSTDYESTS) are compositionally biased toward polar residues. Fibronectin type-III domains follow at residues 339 to 435 (RTEK…ISPT), 445 to 541 (KPQH…IVPT), 542 to 638 (GIKD…TISF), 641 to 734 (APVA…LEPA), and 735 to 827 (PPKS…TEVN). Residues N471 and N500 are each glycosylated (N-linked (GlcNAc...) asparagine). Residues N710, N743, and N800 are each glycosylated (N-linked (GlcNAc...) asparagine). Residues 833–853 (ISVLAILSTLLIGLLLVTLVI) form a helical membrane-spanning segment. Residues 854–1226 (LRKKHLQMAR…DVIYENVSKS (373 aa)) lie on the Cytoplasmic side of the membrane. At S875 the chain carries Phosphoserine. The region spanning 948-1205 (FSLQFEELKL…IFIHQCVQLM (258 aa)) is the Tyrosine-protein phosphatase domain. Substrate-binding positions include D1112, 1146-1152 (CSAGVGR), and Q1190. Residue C1146 is the Phosphocysteine intermediate of the active site. Y1220 is subject to Phosphotyrosine.

The protein belongs to the protein-tyrosine phosphatase family. Receptor class 3 subfamily. In terms of assembly, interacts (phosphorylated form) with FYN and GRB2.

It is found in the membrane. It carries out the reaction O-phospho-L-tyrosyl-[protein] + H2O = L-tyrosyl-[protein] + phosphate. Functionally, possesses tyrosine phosphatase activity. Plays a role in regulating the glomerular pressure/filtration rate relationship through an effect on podocyte structure and function. The chain is Receptor-type tyrosine-protein phosphatase O (Ptpro) from Mus musculus (Mouse).